Consider the following 321-residue polypeptide: Biotin synthase (321 aa).

Positions 44-273 constitute a Radical SAM core domain; it reads FCGNVFDLCT…DGFVRIAAGR (230 aa). [4Fe-4S] cluster-binding residues include C62, C66, and C69. [2Fe-2S] cluster is bound by residues S106, C138, C198, and R268.

Belongs to the radical SAM superfamily. Biotin synthase family. As to quaternary structure, homodimer. The cofactor is [4Fe-4S] cluster. [2Fe-2S] cluster is required as a cofactor.

The catalysed reaction is (4R,5S)-dethiobiotin + (sulfur carrier)-SH + 2 reduced [2Fe-2S]-[ferredoxin] + 2 S-adenosyl-L-methionine = (sulfur carrier)-H + biotin + 2 5'-deoxyadenosine + 2 L-methionine + 2 oxidized [2Fe-2S]-[ferredoxin]. The protein operates within cofactor biosynthesis; biotin biosynthesis; biotin from 7,8-diaminononanoate: step 2/2. Catalyzes the conversion of dethiobiotin (DTB) to biotin by the insertion of a sulfur atom into dethiobiotin via a radical-based mechanism. The polypeptide is Biotin synthase (Akkermansia muciniphila (strain ATCC BAA-835 / DSM 22959 / JCM 33894 / BCRC 81048 / CCUG 64013 / CIP 107961 / Muc)).